The sequence spans 373 residues: MDFTTTEAAQDLGGLVDTIVDAVCTPEHQRELDKLEQRFDRELWRKLIDAGILSSAAPESLGGDGFGVLEQVAVLVALGHQLAAVPYLESVVLAAGALARFGSPELQQGWGVSAVSGDRILTVALDGEMGEGPVQAAGTGHGYRLTGTRTQVGYGPVADAFLVPAETDSGAAVFLVAAGDPGVAVTALATTGLGSVGHLELNGAKVDAARRVGGTDVAVWLGTLSTLSRTAFQLGVLERGLQMTAEYARTREQFDRPIGSFQAVGQRLADGYIDVKGLRLTLTQAAWRVAEDSLASRECPQPADIDVATAGFWAAEAGHRVAHTIVHVHGGVGVDTDHPVHRYFLAAKQTEFALGGATGQLRRIGRELAETPA.

Positions 251, 327, and 331 each coordinate FAD.

The protein belongs to the acyl-CoA dehydrogenase family. Heterotetramer (dimer of heterodimers) composed of FadE26 and FadE27. Requires FAD as cofactor.

The catalysed reaction is (25S)-3-oxocholest-4-en-26-oyl-CoA + A = 3-oxo-cholest-4,24-dien-26-oyl-CoA + AH2. It participates in steroid metabolism; cholesterol degradation. Its activity is regulated as follows. Uncompetitively inhibited by high concentration of 3-OCS-CoA. Involved in the first cycle of side chain dehydrogenation in the beta-oxidation of cholesterol catabolism. It contributes partly to the virulence by increasing the efficiency of beta-oxidation. Catalyzes the dehydrogenation of acyl-CoA ester side chains of (25S)-3-oxo-cholest-4-en-26-oyl-CoA (3-OCS-CoA) to yield (24E)-3-oxo-cholest-4,24-dien-26-oyl-CoA. Also able to dehydrogenate steroyl-CoA such as 3-oxo-chol-4-en-24-oyl-CoA (3-OCO-CoA) as well as 3-oxo-4-pregnene-20-carboxyl-CoA (3-OPC-CoA). It dehydrogenates only (25S)-OCS-CoA diastereomer. The chain is Acyl-CoA dehydrogenase FadE27 (fadE27) from Mycobacterium tuberculosis (strain ATCC 25618 / H37Rv).